The chain runs to 445 residues: Alpha/beta hydrolase psoB (445 aa).

S246 acts as the Nucleophile in catalysis.

The protein belongs to the AB hydrolase superfamily. FUS2 hydrolase family. In terms of assembly, homodimer.

Its pathway is secondary metabolite biosynthesis. Functionally, alpha/beta hydrolase; part of the gene cluster that mediates the biosynthesis of pseurotin A, a competitive inhibitor of chitin synthase and an inducer of nerve-cell proliferation. The PKS-NRPS hybrid synthetase psoA is responsible for the biosynthesis of azaspirene, one of the first intermediates having the 1-oxa-7-azaspiro[4,4]-non-2-ene-4,6-dione core of pseurotin, via condensation of one acetyl-CoA, 4 malonyl-CoA, and a L-phenylalanine molecule. The dual-functional monooxygenase/methyltransferase psoF seems to be involved in the addition of the C3 methyl group onto the pseurotin scaffold. Azaspirene is then converted to synerazol through 4 steps including oxidation of C17 by the cytochrome P450 monooxygenase psoD, O-methylation of the hydroxy group of C8 by the methyltransferase psoC, and the trans-to-cis isomerization of the C13 olefin by the glutathione S-transferase psoE. The fourth step of synerazol production is performed by the dual-functional monooxygenase/methyltransferase psoF which seems to catalyze the epoxidation of the intermediate deepoxy-synerazol. Synerazol can be attacked by a water molecule nonenzymatically at two different positions to yield two diol products, pseurotin A and pseurotin D. In Aspergillus fumigatus (strain ATCC MYA-4609 / CBS 101355 / FGSC A1100 / Af293) (Neosartorya fumigata), this protein is Alpha/beta hydrolase psoB.